The chain runs to 129 residues: NADH-ubiquinone oxidoreductase chain 3 (129 aa).

Helical transmembrane passes span 4 to 24, 48 to 68, and 82 to 102; these read FYMY…WLLA, AAFS…DLEI, and GLYG…AFIL.

The protein belongs to the complex I subunit 3 family.

The protein resides in the mitochondrion membrane. It carries out the reaction a ubiquinone + NADH + 5 H(+)(in) = a ubiquinol + NAD(+) + 4 H(+)(out). Core subunit of the mitochondrial membrane respiratory chain NADH dehydrogenase (Complex I) that is believed to belong to the minimal assembly required for catalysis. Complex I functions in the transfer of electrons from NADH to the respiratory chain. The immediate electron acceptor for the enzyme is believed to be ubiquinone. The sequence is that of NADH-ubiquinone oxidoreductase chain 3 (NAD3) from Candida albicans (strain SC5314 / ATCC MYA-2876) (Yeast).